Consider the following 84-residue polypeptide: Cell division topological specificity factor (84 aa).

Belongs to the MinE family.

Its function is as follows. Prevents the cell division inhibition by proteins MinC and MinD at internal division sites while permitting inhibition at polar sites. This ensures cell division at the proper site by restricting the formation of a division septum at the midpoint of the long axis of the cell. In Burkholderia multivorans (strain ATCC 17616 / 249), this protein is Cell division topological specificity factor.